Here is a 335-residue protein sequence, read N- to C-terminus: Putative hydrogenase expression/formation protein MJ0676 (335 aa).

Belongs to the HypE family.

In Methanocaldococcus jannaschii (strain ATCC 43067 / DSM 2661 / JAL-1 / JCM 10045 / NBRC 100440) (Methanococcus jannaschii), this protein is Putative hydrogenase expression/formation protein MJ0676.